The primary structure comprises 364 residues: MTTPPPQLASAQNPSGDTPTWAMILGRLTTGQGLAPGQTAWAMDQIMTGTATPAQIAAFAVSMKMKRPTSAEVTELADIMLKHARRVPTDVIGTATVDIVGTGGDGANTVNLSTMAAIVVAAAGVPVVKHGNRAASSLSGGADTLEALGLRIDLGPDEVARCVAEVGIGFAFAPQFHPSYRHAGAVRREIGVPTVFNLLGPLTNPASPRAGLIGCAWADLAEVMAGVFATRGSSVLVVHGDDGLDELTTTTTSTIWRVQAGTVERLTFDPAAFGFARAHVSELTGGDAESNAASARAVLGGAKGPVRDAVVLNAAGALVAHAGLSSDAKWVPAWESGLARAKDAIDSGAAEQLLARWVRFTQQL.

5-phospho-alpha-D-ribose 1-diphosphate-binding positions include Gly101, 104–105, Thr109, 111–114, 129–137, and Gly141; these read GD, NLST, and KHGNRAASS. An anthranilate-binding site is contributed by Gly101. Ser113 is a binding site for Mg(2+). Asn132 lines the anthranilate pocket. Position 187 (Arg187) interacts with anthranilate. 2 residues coordinate Mg(2+): Asp245 and Glu246.

The protein belongs to the anthranilate phosphoribosyltransferase family. Homodimer. Requires Mg(2+) as cofactor.

The enzyme catalyses N-(5-phospho-beta-D-ribosyl)anthranilate + diphosphate = 5-phospho-alpha-D-ribose 1-diphosphate + anthranilate. It functions in the pathway amino-acid biosynthesis; L-tryptophan biosynthesis; L-tryptophan from chorismate: step 2/5. Its function is as follows. Catalyzes the transfer of the phosphoribosyl group of 5-phosphorylribose-1-pyrophosphate (PRPP) to anthranilate to yield N-(5'-phosphoribosyl)-anthranilate (PRA). In Mycolicibacterium vanbaalenii (strain DSM 7251 / JCM 13017 / BCRC 16820 / KCTC 9966 / NRRL B-24157 / PYR-1) (Mycobacterium vanbaalenii), this protein is Anthranilate phosphoribosyltransferase.